The following is a 187-amino-acid chain: Phosphatidylethanolamine-binding protein 1 (187 aa).

An N-acetylalanine; in peptide hippocampal cholinergic neurostimulating modification is found at Ala-2. Position 6 is a phosphoserine (Ser-6). At Thr-42 the chain carries Phosphothreonine. A phosphoserine mark is found at Ser-51, Ser-52, Ser-54, Ser-98, and Ser-132. The interaction with RAF1 stretch occupies residues 93–134 (KGNDISSGTVLSDYVGSGPPSGTGLHRYVWLVYEQEQPLSCD).

Belongs to the phosphatidylethanolamine-binding protein family. As to quaternary structure, has a tendency to form dimers by disulfide cross-linking. Interacts with RAF1 and this interaction is enhanced if RAF1 is phosphorylated on residues 'Ser-338', 'Ser-339', 'Tyr-340' and 'Tyr-341'. Interacts with ALOX15; in response to IL13/interleukin-13, prevents the interaction of PEBP1 with RAF1 to activate the ERK signaling cascade. HCNP is expressed in brain. Increased expression in aged senescence-accelerated mice.

It is found in the cytoplasm. Its function is as follows. Binds ATP, opioids and phosphatidylethanolamine. Has lower affinity for phosphatidylinositol and phosphatidylcholine. Serine protease inhibitor which inhibits thrombin, neuropsin and chymotrypsin but not trypsin, tissue type plasminogen activator and elastase. Inhibits the kinase activity of RAF1 by inhibiting its activation and by dissociating the RAF1/MEK complex and acting as a competitive inhibitor of MEK phosphorylation. HCNP may be involved in the function of the presynaptic cholinergic neurons of the central nervous system. HCNP increases the production of choline acetyltransferase but not acetylcholinesterase. Seems to be mediated by a specific receptor. The polypeptide is Phosphatidylethanolamine-binding protein 1 (Pebp1) (Mus musculus (Mouse)).